The following is a 390-amino-acid chain: Chorismate synthase (390 aa).

NADP(+)-binding residues include arginine 39 and arginine 45. Residues 132-134 (RSS), 253-254 (NA), glycine 298, 313-317 (KPIPT), and arginine 339 contribute to the FMN site.

Belongs to the chorismate synthase family. Homotetramer. FMNH2 is required as a cofactor.

The catalysed reaction is 5-O-(1-carboxyvinyl)-3-phosphoshikimate = chorismate + phosphate. It participates in metabolic intermediate biosynthesis; chorismate biosynthesis; chorismate from D-erythrose 4-phosphate and phosphoenolpyruvate: step 7/7. Its function is as follows. Catalyzes the anti-1,4-elimination of the C-3 phosphate and the C-6 proR hydrogen from 5-enolpyruvylshikimate-3-phosphate (EPSP) to yield chorismate, which is the branch point compound that serves as the starting substrate for the three terminal pathways of aromatic amino acid biosynthesis. This reaction introduces a second double bond into the aromatic ring system. In Bacillus pumilus (strain SAFR-032), this protein is Chorismate synthase.